The sequence spans 380 residues: Chaperone protein DnaJ (380 aa).

A J domain is found at 5–70 (DYYEILGVTK…QKRAAYDRFG (66 aa)). Residues 137–215 (GKAETIKIPT…CQGAGRVNRE (79 aa)) form a CR-type zinc finger. Zn(2+) is bound by residues cysteine 150, cysteine 153, cysteine 167, cysteine 170, cysteine 189, cysteine 192, cysteine 203, and cysteine 206. 4 CXXCXGXG motif repeats span residues 150–157 (CEVCDGSG), 167–174 (CPTCAGYG), 189–196 (CPNCHGRG), and 203–210 (CTACQGAG).

Belongs to the DnaJ family. As to quaternary structure, homodimer. Requires Zn(2+) as cofactor.

It is found in the cytoplasm. Functionally, participates actively in the response to hyperosmotic and heat shock by preventing the aggregation of stress-denatured proteins and by disaggregating proteins, also in an autonomous, DnaK-independent fashion. Unfolded proteins bind initially to DnaJ; upon interaction with the DnaJ-bound protein, DnaK hydrolyzes its bound ATP, resulting in the formation of a stable complex. GrpE releases ADP from DnaK; ATP binding to DnaK triggers the release of the substrate protein, thus completing the reaction cycle. Several rounds of ATP-dependent interactions between DnaJ, DnaK and GrpE are required for fully efficient folding. Also involved, together with DnaK and GrpE, in the DNA replication of plasmids through activation of initiation proteins. The protein is Chaperone protein DnaJ of Methylobacterium radiotolerans (strain ATCC 27329 / DSM 1819 / JCM 2831 / NBRC 15690 / NCIMB 10815 / 0-1).